The primary structure comprises 1543 residues: Tubby-related protein 4 (1543 aa).

WD repeat units follow at residues 6-72 (EHGP…STPQ), 73-115 (RINF…YEGR), 116-158 (WSVE…SGQR), 159-237 (HWSS…SDDY), 238-276 (APPQ…YDDL), 277-334 (SPTV…GEHI), and 335-372 (FTLD…RVEH). The SOCS box domain maps to 364 to 414 (ALYVVRVEHRVSSLQLLCQQAIASTLREDKDVSKLTLPPRLCSYLSTAFIP). Disordered stretches follow at residues 530 to 577 (SPKI…SVGS) and 829 to 850 (TKIN…TAAP). Serine 577 is modified (phosphoserine). Asymmetric dimethylarginine is present on residues arginine 945 and arginine 950. Disordered regions lie at residues 1004-1058 (SPRA…HTAS), 1326-1355 (VPQR…AITE), and 1367-1453 (DFNS…ASEK). Polar residues predominate over residues 1036-1050 (TCSQCSGTGPSSQPG). A compositionally biased stretch (basic and acidic residues) spans 1329–1347 (RTEKFGKKNRKRLDSRAEE). A phosphoserine mark is found at serine 1343 and serine 1374. Residues 1443 to 1453 (EEAKCRRASEK) are compositionally biased toward basic and acidic residues. Positions 1466 to 1543 (VMANKQPLWN…ALANVTQRLK (78 aa)) are TUB.

The protein belongs to the TUB family. As to expression, expressed mainly in the brain, skeletal muscle, testis and kidney.

It is found in the cytoplasm. The protein operates within protein modification; protein ubiquitination. In terms of biological role, may be a substrate-recognition component of a SCF-like ECS (Elongin-Cullin-SOCS-box protein) E3 ubiquitin ligase complex which mediates the ubiquitination and subsequent proteasomal degradation of target proteins. The polypeptide is Tubby-related protein 4 (TULP4) (Homo sapiens (Human)).